Consider the following 306-residue polypeptide: Methionyl-tRNA formyltransferase (306 aa).

110-113 (SLLP) lines the (6S)-5,6,7,8-tetrahydrofolate pocket.

This sequence belongs to the Fmt family.

The catalysed reaction is L-methionyl-tRNA(fMet) + (6R)-10-formyltetrahydrofolate = N-formyl-L-methionyl-tRNA(fMet) + (6S)-5,6,7,8-tetrahydrofolate + H(+). Functionally, attaches a formyl group to the free amino group of methionyl-tRNA(fMet). The formyl group appears to play a dual role in the initiator identity of N-formylmethionyl-tRNA by promoting its recognition by IF2 and preventing the misappropriation of this tRNA by the elongation apparatus. This Brucella abortus (strain S19) protein is Methionyl-tRNA formyltransferase.